A 192-amino-acid chain; its full sequence is Lipid A acyltransferase PagP (192 aa).

The signal sequence occupies residues 1–26 (MTVVNKSFLTFLVFFCQILFPLNASA). Catalysis depends on residues His-64, Asp-107, and Ser-108.

Belongs to the lipid A palmitoyltransferase family. As to quaternary structure, homodimer.

The protein resides in the cell outer membrane. The enzyme catalyses a lipid A + a 1,2-diacyl-sn-glycero-3-phosphocholine = a hepta-acyl lipid A + a 2-acyl-sn-glycero-3-phosphocholine. The catalysed reaction is a lipid IVA + a 1,2-diacyl-sn-glycero-3-phosphocholine = a lipid IVB + a 2-acyl-sn-glycero-3-phosphocholine. It carries out the reaction a lipid IIA + a 1,2-diacyl-sn-glycero-3-phosphocholine = a lipid IIB + a 2-acyl-sn-glycero-3-phosphocholine. In terms of biological role, transfers a fatty acid residue from the sn-1 position of a phospholipid to the N-linked hydroxyfatty acid chain on the proximal unit of lipid A or its precursors. The sequence is that of Lipid A acyltransferase PagP from Cronobacter turicensis (strain DSM 18703 / CCUG 55852 / LMG 23827 / z3032).